A 258-amino-acid chain; its full sequence is Chemokine-binding protein (258 aa).

Residues 1–17 (MKQYIVLACMCLAAAAM) form the signal peptide. Residues 65–93 (TEITESESDPDPEVESEDDSTSVEDVDPP) form a disordered region. The span at 68-91 (TESESDPDPEVESEDDSTSVEDVD) shows a compositional bias: acidic residues.

Belongs to the orthopoxvirus OPG001 family. Binds to host CC chemokines, such as RANTES/CCL5, MIP-1alpha/CCL3, MCP-1/CCL2 and eotaxin.

It localises to the secreted. Inhibits host immune defense by binding to host chemokines. Binds host CC chemokines (beta chemokines) such as RANTES with high affinity, but not CXC or C chemokines (alpha and gamma chemokines). This is Chemokine-binding protein (OPG001) from Homo sapiens (Human).